A 341-amino-acid chain; its full sequence is Large ribosomal subunit protein uL3 (341 aa).

Disordered stretches follow at residues 1-31 (MGHR…SPRS) and 234-261 (HRKG…GQMG).

This sequence belongs to the universal ribosomal protein uL3 family. Part of the 50S ribosomal subunit. Forms a cluster with proteins L14 and L24e.

In terms of biological role, one of the primary rRNA binding proteins, it binds directly near the 3'-end of the 23S rRNA, where it nucleates assembly of the 50S subunit. The chain is Large ribosomal subunit protein uL3 from Metallosphaera sedula (strain ATCC 51363 / DSM 5348 / JCM 9185 / NBRC 15509 / TH2).